Consider the following 1131-residue polypeptide: Activity-dependent neuroprotector homeobox protein 2 (1131 aa).

A C2H2-type 1 zinc finger spans residues 73–96 (YCCGLCKYSTKVLTSFKNHLHRYH). A C2H2-type 2; degenerate zinc finger spans residues 106-128 (IPCPNCVFASQPKVVGRHFRMFH). Glycyl lysine isopeptide (Lys-Gly) (interchain with G-Cter in SUMO2) cross-links involve residues K118 and K146. The C2H2-type 3; degenerate zinc-finger motif lies at 155-178 (FTCLKCNFSNTLYYSMKKHVLVAH). The C2H2-type 4 zinc finger occupies 215-240 (YYCKKCNANASSQDALMYHILTSDIH). Residues 274-285 (LAAPANGSAPSA) show a composition bias toward low complexity. The disordered stretch occupies residues 274–329 (LAAPANGSAPSAPAQPPCFHLALPQNSPSPAAGQPVTVAQGAPGSLTHSPPAAGQS). Residues 694–716 (KTCPVCNELFPSNVYQVHMEVAH) form a C2H2-type 5; degenerate zinc finger. Residues 747-768 (VRCLSCKCLVSEEELIHHLLMH) form a C2H2-type 6; degenerate zinc finger. 2 consecutive C2H2-type zinc fingers follow at residues 770–793 (LGCL…RNRH) and 875–898 (STCP…KERH). The C2H2-type 9; degenerate zinc finger occupies 913–937 (FKCIHCCGVYTGNMTLAAIAVHLVR). Residues K979 and K1018 each participate in a glycyl lysine isopeptide (Lys-Gly) (interchain with G-Cter in SUMO2) cross-link. S1024 is subject to Phosphoserine. K1032 is covalently cross-linked (Glycyl lysine isopeptide (Lys-Gly) (interchain with G-Cter in SUMO1); alternate). Residue K1032 forms a Glycyl lysine isopeptide (Lys-Gly) (interchain with G-Cter in SUMO2); alternate linkage. Residues 1043–1102 (PKKYEGRSYEEKKQFLKDYFHKKPYPSKKEIELLSSLFWVWKIDVASFFGKRRYICMKAI) constitute a DNA-binding region (homeobox).

Belongs to the krueppel C2H2-type zinc-finger protein family. May interact with SMARCA4/BRG1.

The protein localises to the nucleus. Functionally, may be involved in transcriptional regulation. May play a role in neuronal function; perhaps involved in protection of brain tissues from oxidative stress. May be involved in erythroid differentiation. This chain is Activity-dependent neuroprotector homeobox protein 2 (ADNP2), found in Homo sapiens (Human).